Here is a 64-residue protein sequence, read N- to C-terminus: Large ribosomal subunit protein uL29 (64 aa).

It belongs to the universal ribosomal protein uL29 family.

In Cupriavidus necator (strain ATCC 17699 / DSM 428 / KCTC 22496 / NCIMB 10442 / H16 / Stanier 337) (Ralstonia eutropha), this protein is Large ribosomal subunit protein uL29.